A 1265-amino-acid chain; its full sequence is 5-oxoprolinase (1265 aa).

It belongs to the oxoprolinase family. Homodimer.

It localises to the cytoplasm. It is found in the cytosol. It catalyses the reaction 5-oxo-L-proline + ATP + 2 H2O = L-glutamate + ADP + phosphate + H(+). Functionally, catalyzes the cleavage of 5-oxo-L-proline to form L-glutamate coupled to the hydrolysis of ATP to ADP and inorganic phosphate. In Dictyostelium discoideum (Social amoeba), this protein is 5-oxoprolinase (oplah).